The sequence spans 393 residues: UDP-N-acetylglucosamine--N-acetylmuramyl-(pentapeptide) pyrophosphoryl-undecaprenol N-acetylglucosamine transferase (393 aa).

UDP-N-acetyl-alpha-D-glucosamine is bound by residues 15–17 (TAG), Asn129, Arg171, Ser211, and Gln322.

Belongs to the glycosyltransferase 28 family. MurG subfamily.

Its subcellular location is the cell membrane. It carries out the reaction di-trans,octa-cis-undecaprenyl diphospho-N-acetyl-alpha-D-muramoyl-L-alanyl-D-glutamyl-meso-2,6-diaminopimeloyl-D-alanyl-D-alanine + UDP-N-acetyl-alpha-D-glucosamine = di-trans,octa-cis-undecaprenyl diphospho-[N-acetyl-alpha-D-glucosaminyl-(1-&gt;4)]-N-acetyl-alpha-D-muramoyl-L-alanyl-D-glutamyl-meso-2,6-diaminopimeloyl-D-alanyl-D-alanine + UDP + H(+). It functions in the pathway cell wall biogenesis; peptidoglycan biosynthesis. Its function is as follows. Cell wall formation. Catalyzes the transfer of a GlcNAc subunit on undecaprenyl-pyrophosphoryl-MurNAc-pentapeptide (lipid intermediate I) to form undecaprenyl-pyrophosphoryl-MurNAc-(pentapeptide)GlcNAc (lipid intermediate II). This Bifidobacterium longum (strain DJO10A) protein is UDP-N-acetylglucosamine--N-acetylmuramyl-(pentapeptide) pyrophosphoryl-undecaprenol N-acetylglucosamine transferase.